The sequence spans 130 residues: Small ribosomal subunit protein uS9 (130 aa).

The protein belongs to the universal ribosomal protein uS9 family.

The sequence is that of Small ribosomal subunit protein uS9 from Streptococcus equi subsp. equi (strain 4047).